Consider the following 212-residue polypeptide: Translation initiation factor IF-3 (212 aa).

Positions 190–203 (LVDKNSDSQDKSVS) are enriched in basic and acidic residues. The disordered stretch occupies residues 190–212 (LVDKNSDSQDKSVSEEDTNEGEQ).

The protein belongs to the IF-3 family. Monomer.

It localises to the cytoplasm. IF-3 binds to the 30S ribosomal subunit and shifts the equilibrium between 70S ribosomes and their 50S and 30S subunits in favor of the free subunits, thus enhancing the availability of 30S subunits on which protein synthesis initiation begins. This is Translation initiation factor IF-3 from Mycoplasmopsis fermentans (Mycoplasma fermentans).